The sequence spans 920 residues: Isoleucine--tRNA ligase (920 aa).

Positions 58-68 (PYANGHLHLGH) match the 'HIGH' region motif. Glutamate 569 provides a ligand contact to L-isoleucyl-5'-AMP. A 'KMSKS' region motif is present at residues 610-614 (KMSKS). Lysine 613 provides a ligand contact to ATP. Zn(2+)-binding residues include cysteine 895, cysteine 898, cysteine 910, and cysteine 913.

It belongs to the class-I aminoacyl-tRNA synthetase family. IleS type 1 subfamily. As to quaternary structure, monomer. Zn(2+) serves as cofactor.

The protein resides in the cytoplasm. The enzyme catalyses tRNA(Ile) + L-isoleucine + ATP = L-isoleucyl-tRNA(Ile) + AMP + diphosphate. Catalyzes the attachment of isoleucine to tRNA(Ile). As IleRS can inadvertently accommodate and process structurally similar amino acids such as valine, to avoid such errors it has two additional distinct tRNA(Ile)-dependent editing activities. One activity is designated as 'pretransfer' editing and involves the hydrolysis of activated Val-AMP. The other activity is designated 'posttransfer' editing and involves deacylation of mischarged Val-tRNA(Ile). The polypeptide is Isoleucine--tRNA ligase (Helicobacter pylori (strain P12)).